The following is a 434-amino-acid chain: Adenylosuccinate synthetase (434 aa).

GTP contacts are provided by residues 22 to 28 (GDEGKGK) and 50 to 52 (GHT). Aspartate 23 serves as the catalytic Proton acceptor. Mg(2+) is bound by residues aspartate 23 and glycine 50. IMP is bound by residues 23 to 26 (DEGK), 48 to 51 (NAGH), threonine 139, arginine 153, glutamine 234, threonine 249, and arginine 313. Histidine 51 acts as the Proton donor in catalysis. 309 to 315 (ATTGRKR) is a substrate binding site. Residues arginine 315, 341–343 (KLD), and 423–425 (SVG) contribute to the GTP site.

Belongs to the adenylosuccinate synthetase family. In terms of assembly, homodimer. The cofactor is Mg(2+).

The protein localises to the cytoplasm. It catalyses the reaction IMP + L-aspartate + GTP = N(6)-(1,2-dicarboxyethyl)-AMP + GDP + phosphate + 2 H(+). The protein operates within purine metabolism; AMP biosynthesis via de novo pathway; AMP from IMP: step 1/2. Plays an important role in the de novo pathway of purine nucleotide biosynthesis. Catalyzes the first committed step in the biosynthesis of AMP from IMP. This is Adenylosuccinate synthetase from Chlorobium luteolum (strain DSM 273 / BCRC 81028 / 2530) (Pelodictyon luteolum).